We begin with the raw amino-acid sequence, 450 residues long: Tubulin alpha chain (450 aa).

A GTP-binding site is contributed by Gln-11. Lys-40 carries the post-translational modification N6-acetyllysine. Positions 71, 140, 144, 145, 179, 206, and 228 each coordinate GTP. Glu-71 contacts Mg(2+). Glu-254 is a catalytic residue.

Belongs to the tubulin family. In terms of assembly, dimer of alpha and beta chains. A typical microtubule is a hollow water-filled tube with an outer diameter of 25 nm and an inner diameter of 15 nM. Alpha-beta heterodimers associate head-to-tail to form protofilaments running lengthwise along the microtubule wall with the beta-tubulin subunit facing the microtubule plus end conferring a structural polarity. Microtubules usually have 13 protofilaments but different protofilament numbers can be found in some organisms and specialized cells. Mg(2+) is required as a cofactor. In terms of processing, acetylation of alpha chains at Lys-40 stabilizes microtubules and affects affinity and processivity of microtubule motors. This modification has a role in multiple cellular functions, ranging from cell motility, cell cycle progression or cell differentiation to intracellular trafficking and signaling.

Its subcellular location is the cytoplasm. It is found in the cytoskeleton. It carries out the reaction GTP + H2O = GDP + phosphate + H(+). Functionally, tubulin is the major constituent of microtubules, a cylinder consisting of laterally associated linear protofilaments composed of alpha- and beta-tubulin heterodimers. Microtubules grow by the addition of GTP-tubulin dimers to the microtubule end, where a stabilizing cap forms. Below the cap, tubulin dimers are in GDP-bound state, owing to GTPase activity of alpha-tubulin. This chain is Tubulin alpha chain, found in Tyrophagus putrescentiae (Mold mite).